We begin with the raw amino-acid sequence, 703 residues long: MEKPRGTEETPSSEPMEEEEDDDLELFGGYDSFRSYNSSAGSESSSYLEESSEAENEDREAGELPTSPLHLFSSANNRALDGSGSEPAVCEMCGIVGTREAFFSKTKRFCSVSCSRSYSSNSKKASILARLQGKPPTKKAKVLHKAAWSAKIGAFLHAQGTGQLADGTPTGQDALVLGFDWGKFLKDHSYKAAPVGCFKHVPLYDQWEDVMKGMKVEVLNSDAVLPSRVYWIATVIQAAGYRVLLRYEGFENDASHDFWCNLGTVDVHPIGWCAINSKILVPPRTIHAKFTDWKSYLMKRLVGSRTLPADFHIKMVESMKYPFRQGMRLEVVDKTQVSRTRMAVVDTVIGGRLRLLYEDGDSDDDFWCHMWSPLIHPVGWSRRVGHGIKMSERRCDMSHHPTFRKIYCDAVPYLFKKVRAVYTEGGWFEEGMKLEAIDPLNLGNICVATICKVLLDGYLMICVDGGPSTDGSDWFCYHASSHAIFPATFCQKNDIELTPPKGYETQPFDWESYLEKTKSKAAPARLFNMDCPNHGFKVGMKLEAVDLMEPRLICVATVKRVVHRLLSIHFDGWDNEYDQWVDCESPDIYPVGWCELTGYQLQPPVSAEPNTPQKGKDATKKKKKQFGKKRKRIPSAKTRPLRQSSKKPLLEDNLEALGVSEPVPDDIIAVCVKEEHQDLPSPDRSPSPLLPLPTESIKQERDS.

Residues 1–70 (MEKPRGTEET…AGELPTSPLH (70 aa)) are disordered. S13 carries the phosphoserine modification. Over residues 15-25 (PMEEEEDDDLE) the composition is skewed to acidic residues. Positions 35 to 49 (SYNSSAGSESSSYLE) are enriched in low complexity. The segment covering 50–60 (ESSEAENEDRE) has biased composition (acidic residues). A Phosphoserine modification is found at S67. Residues 81–116 (DGSGSEPAVCEMCGIVGTREAFFSKTKRFCSVSCSR) form an FCS-type zinc finger. C90, C93, C110, and C114 together coordinate Zn(2+). MBT repeat units follow at residues 179–283 (FDWG…LVPP), 291–391 (TDWK…IKMS), 397–500 (MSHH…LTPP), and 508–604 (FDWE…LQPP). S338 is modified (phosphoserine). K405 is covalently cross-linked (Glycyl lysine isopeptide (Lys-Gly) (interchain with G-Cter in SUMO2)). Disordered regions lie at residues 604–649 (PVSA…KKPL) and 672–703 (VKEE…ERDS). The span at 619-634 (TKKKKKQFGKKRKRIP) shows a compositional bias: basic residues. Glycyl lysine isopeptide (Lys-Gly) (interchain with G-Cter in SUMO2) cross-links involve residues K647 and K673. Phosphoserine occurs at positions 681, 685, and 687. A Glycyl lysine isopeptide (Lys-Gly) (interchain with G-Cter in SUMO1); alternate cross-link involves residue K698. K698 is covalently cross-linked (Glycyl lysine isopeptide (Lys-Gly) (interchain with G-Cter in SUMO2); alternate).

Part of the E2F6.com-1 complex in G0 phase composed of E2F6, MGA, MAX, TFDP1, CBX3, BAT8, EUHMTASE1, RING1, RNF2, MBLR, BAT8 and YAF2.

The protein resides in the nucleus. Its function is as follows. Putative Polycomb group (PcG) protein. PcG proteins maintain the transcriptionally repressive state of genes, probably via a modification of chromatin, rendering it heritably changed in its expressibility. Its association with a chromatin-remodeling complex suggests that it may contribute to prevent expression of genes that trigger the cell into mitosis. Binds to monomethylated and dimethylated 'Lys-20' on histone H4. Binds histone H3 peptides that are monomethylated or dimethylated on 'Lys-4', 'Lys-9' or 'Lys-27'. This chain is Lethal(3)malignant brain tumor-like protein 2 (L3mbtl2), found in Rattus norvegicus (Rat).